The following is a 302-amino-acid chain: Sulfate adenylyltransferase subunit 2 (302 aa).

Positions arginine 280–phenylalanine 302 are disordered.

This sequence belongs to the PAPS reductase family. CysD subfamily. As to quaternary structure, heterodimer composed of CysD, the smaller subunit, and CysN.

It carries out the reaction sulfate + ATP + H(+) = adenosine 5'-phosphosulfate + diphosphate. It functions in the pathway sulfur metabolism; hydrogen sulfide biosynthesis; sulfite from sulfate: step 1/3. Functionally, with CysN forms the ATP sulfurylase (ATPS) that catalyzes the adenylation of sulfate producing adenosine 5'-phosphosulfate (APS) and diphosphate, the first enzymatic step in sulfur assimilation pathway. APS synthesis involves the formation of a high-energy phosphoric-sulfuric acid anhydride bond driven by GTP hydrolysis by CysN coupled to ATP hydrolysis by CysD. The polypeptide is Sulfate adenylyltransferase subunit 2 (Hahella chejuensis (strain KCTC 2396)).